The chain runs to 506 residues: Protein MGF 505-4R (506 aa).

The protein belongs to the asfivirus MGF 505 family.

Its function is as follows. Plays a role in virus cell tropism, and may be required for efficient virus replication in macrophages. The protein is Protein MGF 505-4R of Ornithodoros (relapsing fever ticks).